The chain runs to 290 residues: Elongation factor Ts (290 aa).

Residues 81–84 are involved in Mg(2+) ion dislocation from EF-Tu; it reads TDFV.

The protein belongs to the EF-Ts family.

It localises to the cytoplasm. Its function is as follows. Associates with the EF-Tu.GDP complex and induces the exchange of GDP to GTP. It remains bound to the aminoacyl-tRNA.EF-Tu.GTP complex up to the GTP hydrolysis stage on the ribosome. This is Elongation factor Ts from Saccharophagus degradans (strain 2-40 / ATCC 43961 / DSM 17024).